Consider the following 167-residue polypeptide: Protein-export protein SecB (167 aa).

It belongs to the SecB family. Homotetramer, a dimer of dimers. One homotetramer interacts with 1 SecA dimer.

It localises to the cytoplasm. In terms of biological role, one of the proteins required for the normal export of preproteins out of the cell cytoplasm. It is a molecular chaperone that binds to a subset of precursor proteins, maintaining them in a translocation-competent state. It also specifically binds to its receptor SecA. The protein is Protein-export protein SecB of Idiomarina loihiensis (strain ATCC BAA-735 / DSM 15497 / L2-TR).